The primary structure comprises 357 residues: MNTLFIHCRPGFEGEVCSEIADHAARLNVAGYAKAKPSTACAEFICTEDDGAQRLMQGLRFPELIFPRQWARGGFIDLPETDRISVILAYLANFPQCGSLWLEVVDTNDGKELSNFCKKFEAPLRKALTAAGKLVDDATKPRLLLTFKSGREVFVGLADAGNSAMWPMGIPRLKFPREAPSRSTLKLEEAWHHFIPRDQWDERLHGDMTGVDLGAAPGGWTWQLVNRGMLVTAVDNGPMAESLMDTGLVQHLMADGFTYKPRQPVDWMVCDIVEKPARNAALLETWIGEGHCREAVVNLKLPMRQRYAEVKRLLERIEEGFKARGIRVAIGCKQLYHDREEVTCHLRRLDLKKPKSA.

Residues serine 183, 216–219 (APGG), aspartate 235, aspartate 255, and aspartate 271 each bind S-adenosyl-L-methionine. Residue lysine 300 is the Proton acceptor of the active site.

This sequence belongs to the class I-like SAM-binding methyltransferase superfamily. RNA methyltransferase RlmE family. RlmM subfamily. In terms of assembly, monomer.

Its subcellular location is the cytoplasm. It catalyses the reaction cytidine(2498) in 23S rRNA + S-adenosyl-L-methionine = 2'-O-methylcytidine(2498) in 23S rRNA + S-adenosyl-L-homocysteine + H(+). Catalyzes the 2'-O-methylation at nucleotide C2498 in 23S rRNA. The polypeptide is Ribosomal RNA large subunit methyltransferase M (Pseudomonas fluorescens (strain ATCC BAA-477 / NRRL B-23932 / Pf-5)).